The primary structure comprises 89 residues: Small ribosomal subunit protein uS17 (89 aa).

This sequence belongs to the universal ribosomal protein uS17 family. As to quaternary structure, part of the 30S ribosomal subunit.

One of the primary rRNA binding proteins, it binds specifically to the 5'-end of 16S ribosomal RNA. This Polaromonas sp. (strain JS666 / ATCC BAA-500) protein is Small ribosomal subunit protein uS17.